The primary structure comprises 352 residues: Quinolinate synthase (352 aa).

Positions 48 and 69 each coordinate iminosuccinate. Residue Cys114 coordinates [4Fe-4S] cluster. Iminosuccinate is bound by residues 140-142 (YAN) and Ser157. Residue Cys201 participates in [4Fe-4S] cluster binding. Residues 227 to 229 (HPE) and Thr244 contribute to the iminosuccinate site. A [4Fe-4S] cluster-binding site is contributed by Cys298.

This sequence belongs to the quinolinate synthase family. Type 1 subfamily. It depends on [4Fe-4S] cluster as a cofactor.

The protein resides in the cytoplasm. The catalysed reaction is iminosuccinate + dihydroxyacetone phosphate = quinolinate + phosphate + 2 H2O + H(+). Its pathway is cofactor biosynthesis; NAD(+) biosynthesis; quinolinate from iminoaspartate: step 1/1. In terms of biological role, catalyzes the condensation of iminoaspartate with dihydroxyacetone phosphate to form quinolinate. In Pseudomonas syringae pv. syringae (strain B728a), this protein is Quinolinate synthase.